A 275-amino-acid polypeptide reads, in one-letter code: Lincomycin biosynthesis protein LmbN (275 aa).

The 78-residue stretch at 1 to 78 (MSTLDEVLAL…AIAATVARIT (78 aa)) folds into the Carrier domain. The residue at position 37 (Ser37) is an O-(pantetheine 4'-phosphoryl)serine. The region spanning 113–275 (LFDTWHAGGT…HHALCVAHAP (163 aa)) is the SIS domain.

It functions in the pathway antibiotic biosynthesis; lincomycin biosynthesis. The sequence is that of Lincomycin biosynthesis protein LmbN (lmbN) from Streptomyces lincolnensis.